The sequence spans 526 residues: Fumitremorgin C synthase (526 aa).

The helical transmembrane segment at 4-24 (LPLSPAVLFLTITLPILYFWI) threads the bilayer. Cys-443 is a heme binding site.

This sequence belongs to the cytochrome P450 family. Heme is required as a cofactor.

The protein resides in the membrane. The enzyme catalyses tryprostatin A + reduced [NADPH--hemoprotein reductase] + O2 = fumitremorgin C + oxidized [NADPH--hemoprotein reductase] + 2 H2O + H(+). The protein operates within mycotoxin biosynthesis. In terms of biological role, cytochrome P450 monooxygenase; part of the gene cluster that mediates the biosynthesis of fumitremorgins, indole alkaloids that carry not only intriguing chemical structures, but also interesting biological and pharmacological activities. The biosynthesis of fumitremorgin-type alkaloids begins by condensation of the two amino acids L-tryptophan and L-proline to brevianamide F, catalyzed by the non-ribosomal peptide synthetase ftmPS/ftmA. Brevianamide F is then prenylated by the prenyltransferase ftmPT1/ftmB in the presence of dimethylallyl diphosphate, resulting in the formation of tryprostatin B. The three cytochrome P450 monooxygenases, ftmP450-1/ftmC, ftmP450-2/ftmE and ftmP450-3/FtmG, are responsible for the conversion of tryprostatin B to 6-hydroxytryprostatin B, tryprostatin A to fumitremorgin C and fumitremorgin C to 12,13-dihydroxyfumitremorgin C, respectively. The putative methyltransferase ftmMT/ftmD is expected for the conversion of 6-hydroxytryprostatin B to tryprostatin A. FtmPT2/FtmH catalyzes the prenylation of 12,13-dihydroxyfumitre-morgin C in the presence of dimethylallyl diphosphate, resulting in the formation of fumitremorgin B. Fumitremorgin B is further converted to verruculogen by ftmOx1/ftmF via the insertion of an endoperoxide bond between the two prenyl moieties. Finally, verruculogen is further converted to fumitremorgin A by the verruculogen prenyltransferase ftmPT3. The protein is Fumitremorgin C synthase of Neosartorya fischeri (strain ATCC 1020 / DSM 3700 / CBS 544.65 / FGSC A1164 / JCM 1740 / NRRL 181 / WB 181) (Aspergillus fischerianus).